Here is a 425-residue protein sequence, read N- to C-terminus: MHDIDFIKNNPELFDEAMQNRNFGKIAHKIIELSANKKHTLTQLYSLQKERNNITQEIEKLKKDNIQCDTQIELSKEITKKINHINNMIKTDSELIDLLNILPNIPDKKVPIGKDENDNIEIRRYGKKVDFKFPPKTHYELGENLNLMDFKQAAKLSGSRFVILKSQLAQLDRALANFMLDVHTQEFGYSEISHPVLVHESAMYGVGQLPKFADDSFKTTDNFRLIPTSEVALTNLVSNANINANELPIRLTACSQCFRSEAGSAGKDVRGMMRQHQFNKVELVSIVTEEQSELELERMTQVAEEILKKLELPYRVMMLCTGDLGFSASITYDIEVWIPSQNQYREISSCSNCKAFQARRMNAKYHTISNGNKVNKFVHTLNGSALAIGRTIIAILENYQNQDGSITIPHVLRKYMNNQDIIKKQ.

Thr228–Glu230 contacts L-serine. Arg259–Glu261 contributes to the ATP binding site. Residue Glu282 coordinates L-serine. Glu346 to Ser349 contributes to the ATP binding site. Ser384 provides a ligand contact to L-serine.

It belongs to the class-II aminoacyl-tRNA synthetase family. Type-1 seryl-tRNA synthetase subfamily. In terms of assembly, homodimer. The tRNA molecule binds across the dimer.

It localises to the cytoplasm. It catalyses the reaction tRNA(Ser) + L-serine + ATP = L-seryl-tRNA(Ser) + AMP + diphosphate + H(+). The enzyme catalyses tRNA(Sec) + L-serine + ATP = L-seryl-tRNA(Sec) + AMP + diphosphate + H(+). Its pathway is aminoacyl-tRNA biosynthesis; selenocysteinyl-tRNA(Sec) biosynthesis; L-seryl-tRNA(Sec) from L-serine and tRNA(Sec): step 1/1. Catalyzes the attachment of serine to tRNA(Ser). Is also able to aminoacylate tRNA(Sec) with serine, to form the misacylated tRNA L-seryl-tRNA(Sec), which will be further converted into selenocysteinyl-tRNA(Sec). The protein is Serine--tRNA ligase of Ehrlichia ruminantium (strain Gardel).